The sequence spans 451 residues: Phosphoglucosamine mutase (451 aa).

The active-site Phosphoserine intermediate is the Ser102. Mg(2+) is bound by residues Ser102, Asp243, Asp245, and Asp247. Ser102 bears the Phosphoserine mark.

This sequence belongs to the phosphohexose mutase family. Mg(2+) serves as cofactor. Activated by phosphorylation.

The enzyme catalyses alpha-D-glucosamine 1-phosphate = D-glucosamine 6-phosphate. Functionally, catalyzes the conversion of glucosamine-6-phosphate to glucosamine-1-phosphate. This is Phosphoglucosamine mutase from Sinorhizobium medicae (strain WSM419) (Ensifer medicae).